A 1033-amino-acid polypeptide reads, in one-letter code: Tyrosine-protein kinase-like otk (1033 aa).

An N-terminal signal peptide occupies residues 1–22; the sequence is MTARMISICGLVMALMMASVLA. Residues 23–581 are Extracellular-facing; it reads SSSRFQRVPQ…GGDGFLVTRA (559 aa). 5 consecutive Ig-like C2-type domains span residues 25–114, 113–199, 251–365, 368–463, and 468–558; these read SRFQ…AKLS, LSVI…RVMS, PEDL…APIN, PGIL…VAIN, and PKFS…VQLV. An N-linked (GlcNAc...) asparagine glycan is attached at N39. Cystine bridges form between C46-C95, C137-C188, C276-C354, and C399-C447. N336, N417, N429, N444, N457, N512, and N524 each carry an N-linked (GlcNAc...) asparagine glycan. C490 and C542 are disulfide-bonded. Residues 582 to 602 form a helical membrane-spanning segment; sequence VLITMTVALAYIVLVVGLMLW. Residues 603-1033 are Cytoplasmic-facing; sequence CRYRRQARKA…LSKAMQSAEK (431 aa). Disordered stretches follow at residues 617 to 679 and 718 to 760; these read LSTK…KKSA and SPSD…KTSM. A compositionally biased stretch (polar residues) spans 655–673; it reads KSSGDAQKSDDTACSQQSR. At S678 the chain carries Phosphoserine. The region spanning 692–1028 is the Protein kinase; inactive domain; it reads LSELIQIGRG…QLGAALSKAM (337 aa). The segment covering 720 to 731 has biased composition (basic and acidic residues); sequence SDKDADTEKQHS.

Belongs to the protein kinase superfamily. Tyr protein kinase family. Insulin receptor subfamily. As to quaternary structure, interacts with plexA; component of a receptor complex that mediates the repulsive signaling in response to Semaphorin ligands. In terms of tissue distribution, dynamically expressed during embryogenesis in several areas of the developing nervous system, including neurons and fasciculating axons. Expression in stage 7 embryos is seen in the anterior midgut primordia, cephalic furrow and along the germinal band. At stage 11, expression is in 15 stripes over the trunk region, and in the anterior and posterior midgut primordia. Stage 12 shows expression in the developing nervous system, procephalic lobe and maxillar bud. Stage 13 shows expression in the ventral cord, maxillar segment and in three regions of the gut. At stage 16 expression is preferentially detected throughout the nervous system, including the neuromers in the ventral cord and the supraesophageal ganglion (at protein level). In larva, expression is seen in developing R cells and is localized predominantly to R1-R6 growth cones.

It is found in the cell membrane. Acts as a calcium-dependent, homophilic cell adhesion molecule that regulates neural recognition during the development of the nervous system. Component of the repulsive Plexin signaling response to regulate motor axon guidance at the embryonic stage. Also component of a receptor complex that is required in the adult visual system to innervate the lamina layer; specific targeting of R1-R6 axons. This is Tyrosine-protein kinase-like otk from Drosophila melanogaster (Fruit fly).